The primary structure comprises 372 residues: Queuine tRNA-ribosyltransferase (372 aa).

D89 (proton acceptor) is an active-site residue. Residues 89–93, D161, and G232 contribute to the substrate site; that span reads DSGGF. Positions 262–268 are RNA binding; sequence GIGDLPS. D281 functions as the Nucleophile in the catalytic mechanism. The segment at 286–290 is RNA binding; important for wobble base 34 recognition; sequence TKAAR. Residues C319, C321, C324, and H351 each contribute to the Zn(2+) site.

This sequence belongs to the queuine tRNA-ribosyltransferase family. As to quaternary structure, homodimer. Within each dimer, one monomer is responsible for RNA recognition and catalysis, while the other monomer binds to the replacement base PreQ1. Zn(2+) serves as cofactor.

It catalyses the reaction 7-aminomethyl-7-carbaguanine + guanosine(34) in tRNA = 7-aminomethyl-7-carbaguanosine(34) in tRNA + guanine. It functions in the pathway tRNA modification; tRNA-queuosine biosynthesis. In terms of biological role, catalyzes the base-exchange of a guanine (G) residue with the queuine precursor 7-aminomethyl-7-deazaguanine (PreQ1) at position 34 (anticodon wobble position) in tRNAs with GU(N) anticodons (tRNA-Asp, -Asn, -His and -Tyr). Catalysis occurs through a double-displacement mechanism. The nucleophile active site attacks the C1' of nucleotide 34 to detach the guanine base from the RNA, forming a covalent enzyme-RNA intermediate. The proton acceptor active site deprotonates the incoming PreQ1, allowing a nucleophilic attack on the C1' of the ribose to form the product. After dissociation, two additional enzymatic reactions on the tRNA convert PreQ1 to queuine (Q), resulting in the hypermodified nucleoside queuosine (7-(((4,5-cis-dihydroxy-2-cyclopenten-1-yl)amino)methyl)-7-deazaguanosine). This is Queuine tRNA-ribosyltransferase from Chlamydia felis (strain Fe/C-56) (Chlamydophila felis).